Here is an 856-residue protein sequence, read N- to C-terminus: Glucans biosynthesis glucosyltransferase H (856 aa).

6 helical membrane-spanning segments follow: residues 144-164 (ILLV…KGIM), 198-218 (ILIL…TALM), 517-537 (VFLT…FLVL), 574-594 (LFST…ILIW), 608-628 (TLSM…RMIF), and 684-704 (FLWW…VSVI).

This sequence belongs to the glycosyltransferase 2 family. OpgH subfamily.

The protein localises to the cell inner membrane. It participates in glycan metabolism; osmoregulated periplasmic glucan (OPG) biosynthesis. In terms of biological role, involved in the biosynthesis of osmoregulated periplasmic glucans (OPGs). The protein is Glucans biosynthesis glucosyltransferase H of Pseudomonas fluorescens (strain ATCC BAA-477 / NRRL B-23932 / Pf-5).